Consider the following 142-residue polypeptide: Coactosin-like protein (142 aa).

Position 2 is an N-acetylalanine (alanine 2). The ADF-H domain maps to 2-130; that stretch reads ATKIDKEACR…EEDFIRSELK (129 aa). Residues 66–75 are flexible and important for F-actin binding; it reads TGDAMSKRSK. Lysine 102 carries the post-translational modification N6-acetyllysine. The residue at position 141 (serine 141) is a Phosphoserine.

The protein belongs to the actin-binding proteins ADF family. Coactosin subfamily. Interacts with 5-lipoxygenase (ALOX5/5LO) in a calcium-independent manner. Binds to F-actin with a stoichiometry of 1:2.

Its subcellular location is the cytoplasm. The protein resides in the cytoskeleton. It is found in the nucleus. In terms of biological role, binds to F-actin in a calcium-independent manner. Has no direct effect on actin depolymerization. Acts as a chaperone for ALOX5 (5LO), influencing both its stability and activity in leukotrienes synthesis. This is Coactosin-like protein (Cotl1) from Mus musculus (Mouse).